The sequence spans 503 residues: Probable cytosol aminopeptidase (503 aa).

2 residues coordinate Mn(2+): Lys270 and Asp275. Residue Lys282 is part of the active site. Residues Asp293, Asp352, and Glu354 each contribute to the Mn(2+) site. Arg356 is a catalytic residue.

The protein belongs to the peptidase M17 family. Mn(2+) is required as a cofactor.

It is found in the cytoplasm. It carries out the reaction Release of an N-terminal amino acid, Xaa-|-Yaa-, in which Xaa is preferably Leu, but may be other amino acids including Pro although not Arg or Lys, and Yaa may be Pro. Amino acid amides and methyl esters are also readily hydrolyzed, but rates on arylamides are exceedingly low.. The catalysed reaction is Release of an N-terminal amino acid, preferentially leucine, but not glutamic or aspartic acids.. Presumably involved in the processing and regular turnover of intracellular proteins. Catalyzes the removal of unsubstituted N-terminal amino acids from various peptides. This Escherichia coli O139:H28 (strain E24377A / ETEC) protein is Probable cytosol aminopeptidase.